We begin with the raw amino-acid sequence, 383 residues long: Chorismate synthase (383 aa).

2 residues coordinate NADP(+): Arg-40 and Arg-46. FMN is bound by residues 128 to 130 (RAS), Gly-291, 306 to 310 (KPIPT), and Arg-332.

Belongs to the chorismate synthase family. Homotetramer. FMNH2 serves as cofactor.

The enzyme catalyses 5-O-(1-carboxyvinyl)-3-phosphoshikimate = chorismate + phosphate. It participates in metabolic intermediate biosynthesis; chorismate biosynthesis; chorismate from D-erythrose 4-phosphate and phosphoenolpyruvate: step 7/7. Catalyzes the anti-1,4-elimination of the C-3 phosphate and the C-6 proR hydrogen from 5-enolpyruvylshikimate-3-phosphate (EPSP) to yield chorismate, which is the branch point compound that serves as the starting substrate for the three terminal pathways of aromatic amino acid biosynthesis. This reaction introduces a second double bond into the aromatic ring system. In Moorella thermoacetica (strain ATCC 39073 / JCM 9320), this protein is Chorismate synthase.